Reading from the N-terminus, the 276-residue chain is uncharacterized protein (276 aa).

This is an uncharacterized protein from Methanocaldococcus jannaschii (strain ATCC 43067 / DSM 2661 / JAL-1 / JCM 10045 / NBRC 100440) (Methanococcus jannaschii).